A 207-amino-acid polypeptide reads, in one-letter code: Thymidylate kinase (207 aa).

7–14 is a binding site for ATP; it reads GCEGSGKS.

Belongs to the thymidylate kinase family.

The enzyme catalyses dTMP + ATP = dTDP + ADP. Functionally, phosphorylation of dTMP to form dTDP in both de novo and salvage pathways of dTTP synthesis. This is Thymidylate kinase from Chlamydia felis (strain Fe/C-56) (Chlamydophila felis).